A 393-amino-acid chain; its full sequence is Succinate--CoA ligase [ADP-forming] subunit beta (393 aa).

The 229-residue stretch at 9–237 (RDLFAKHGVP…KDAANPLEAA (229 aa)) folds into the ATP-grasp domain. ATP contacts are provided by residues lysine 45, 52 to 54 (GRG), glutamate 92, proline 95, and glutamate 100. Mg(2+) is bound by residues asparagine 192 and aspartate 206. Residues asparagine 257 and 319 to 321 (GIT) contribute to the substrate site.

It belongs to the succinate/malate CoA ligase beta subunit family. In terms of assembly, heterotetramer of two alpha and two beta subunits. It depends on Mg(2+) as a cofactor.

The enzyme catalyses succinate + ATP + CoA = succinyl-CoA + ADP + phosphate. It carries out the reaction GTP + succinate + CoA = succinyl-CoA + GDP + phosphate. It functions in the pathway carbohydrate metabolism; tricarboxylic acid cycle; succinate from succinyl-CoA (ligase route): step 1/1. Functionally, succinyl-CoA synthetase functions in the citric acid cycle (TCA), coupling the hydrolysis of succinyl-CoA to the synthesis of either ATP or GTP and thus represents the only step of substrate-level phosphorylation in the TCA. The beta subunit provides nucleotide specificity of the enzyme and binds the substrate succinate, while the binding sites for coenzyme A and phosphate are found in the alpha subunit. The polypeptide is Succinate--CoA ligase [ADP-forming] subunit beta (Streptomyces griseus subsp. griseus (strain JCM 4626 / CBS 651.72 / NBRC 13350 / KCC S-0626 / ISP 5235)).